We begin with the raw amino-acid sequence, 343 residues long: Annexin A1 isoform p37 (343 aa).

An Isoglutamyl lysine isopeptide (Gln-Lys) (interchain with K-?) cross-link involves residue Q19. Y21 is subject to Phosphotyrosine; by EGFR; in vitro. Residue S24 is modified to Phosphoserine; by PKC; in vitro. Annexin repeat units lie at residues 38–109 (FDPS…ALLK), 110–181 (TPAQ…VLAK), 193–265 (DLAD…ALVK), and 269–340 (SKPA…ALCG).

It belongs to the annexin family. In terms of processing, phosphorylated by protein kinase C and epidermal growth factor receptor/kinase. Post-translationally, the N-terminus is blocked.

It localises to the nucleus. It is found in the cytoplasm. Its subcellular location is the cell projection. The protein resides in the cilium. The protein localises to the basolateral cell membrane. Functionally, calcium/phospholipid-binding protein which promotes membrane fusion and is involved in exocytosis. This protein regulates phospholipase A2 activity. It seems to bind from two to four calcium ions with high affinity. The chain is Annexin A1 isoform p37 (CP37) from Columba livia (Rock dove).